Reading from the N-terminus, the 434-residue chain is Adenylosuccinate synthetase (434 aa).

Residues 22–28 (GDEGKGK) and 50–52 (GHT) contribute to the GTP site. Catalysis depends on aspartate 23, which acts as the Proton acceptor. Positions 23 and 50 each coordinate Mg(2+). Residues 23 to 26 (DEGK), 48 to 51 (NAGH), threonine 139, arginine 153, glutamine 234, threonine 249, and arginine 313 each bind IMP. Catalysis depends on histidine 51, which acts as the Proton donor. 309–315 (ATTGRKR) lines the substrate pocket. Residues arginine 315, 341 to 343 (KLD), and 423 to 425 (SVG) each bind GTP.

It belongs to the adenylosuccinate synthetase family. Homodimer. Mg(2+) is required as a cofactor.

It is found in the cytoplasm. The enzyme catalyses IMP + L-aspartate + GTP = N(6)-(1,2-dicarboxyethyl)-AMP + GDP + phosphate + 2 H(+). The protein operates within purine metabolism; AMP biosynthesis via de novo pathway; AMP from IMP: step 1/2. In terms of biological role, plays an important role in the de novo pathway of purine nucleotide biosynthesis. Catalyzes the first committed step in the biosynthesis of AMP from IMP. The chain is Adenylosuccinate synthetase from Chlorobium luteolum (strain DSM 273 / BCRC 81028 / 2530) (Pelodictyon luteolum).